The sequence spans 142 residues: Transcription antitermination protein NusB (142 aa).

It belongs to the NusB family.

Its function is as follows. Involved in transcription antitermination. Required for transcription of ribosomal RNA (rRNA) genes. Binds specifically to the boxA antiterminator sequence of the ribosomal RNA (rrn) operons. This chain is Transcription antitermination protein NusB, found in Levilactobacillus brevis (strain ATCC 367 / BCRC 12310 / CIP 105137 / JCM 1170 / LMG 11437 / NCIMB 947 / NCTC 947) (Lactobacillus brevis).